Reading from the N-terminus, the 344-residue chain is Mycothiol acetyltransferase (344 aa).

1D-myo-inositol 2-(L-cysteinylamino)-2-deoxy-alpha-D-glucopyranoside is bound at residue E36. 2 N-acetyltransferase domains span residues 40 to 179 (LALR…TPLP) and 187 to 344 (VTVR…PSTG). Residues 61-83 (ADTSGPNVPDTPGDQNAADTSTM) are disordered. A compositionally biased stretch (polar residues) spans 73–83 (GDQNAADTSTM). Acetyl-CoA is bound at residue 109-111 (VVV). 3 residues coordinate 1D-myo-inositol 2-(L-cysteinylamino)-2-deoxy-alpha-D-glucopyranoside: E214, K253, and E272. Residues 276–278 (VGV) and 283–289 (GGAGLGR) each bind acetyl-CoA. Y310 contributes to the 1D-myo-inositol 2-(L-cysteinylamino)-2-deoxy-alpha-D-glucopyranoside binding site. Acetyl-CoA is bound at residue 315–320 (NVRAVR).

It belongs to the acetyltransferase family. MshD subfamily. In terms of assembly, monomer.

The catalysed reaction is 1D-myo-inositol 2-(L-cysteinylamino)-2-deoxy-alpha-D-glucopyranoside + acetyl-CoA = mycothiol + CoA + H(+). Catalyzes the transfer of acetyl from acetyl-CoA to desacetylmycothiol (Cys-GlcN-Ins) to form mycothiol. The chain is Mycothiol acetyltransferase from Frankia casuarinae (strain DSM 45818 / CECT 9043 / HFP020203 / CcI3).